We begin with the raw amino-acid sequence, 148 residues long: MPFTYHRTINFQDTDAAGVVYFANILSICHEGYEASLRTSGISLKEFFTNPSMAFPIVHASVDFLRPLFCGAQVIISLVPQKIGAEKFEINYEIYLADVLVAKAVTRHVCIDANTRSKQELSMEIIQWLDGYRKDTEEVERRKAREVV.

The active site involves Asp-15.

The protein belongs to the 4-hydroxybenzoyl-CoA thioesterase family. DHNA-CoA hydrolase subfamily.

The catalysed reaction is 1,4-dihydroxy-2-naphthoyl-CoA + H2O = 1,4-dihydroxy-2-naphthoate + CoA + H(+). It participates in cofactor biosynthesis; phylloquinone biosynthesis. Its pathway is quinol/quinone metabolism; 1,4-dihydroxy-2-naphthoate biosynthesis; 1,4-dihydroxy-2-naphthoate from chorismate: step 7/7. Catalyzes the hydrolysis of 1,4-dihydroxy-2-naphthoyl-CoA (DHNA-CoA) to 1,4-dihydroxy-2-naphthoate (DHNA), a reaction involved in phylloquinone (vitamin K1) biosynthesis. The polypeptide is 1,4-dihydroxy-2-naphthoyl-CoA hydrolase (Nostoc sp. (strain PCC 7120 / SAG 25.82 / UTEX 2576)).